Consider the following 293-residue polypeptide: Ribosomal protein L11 methyltransferase (293 aa).

Residues threonine 145, glycine 166, aspartate 188, and asparagine 230 each contribute to the S-adenosyl-L-methionine site.

The protein belongs to the methyltransferase superfamily. PrmA family.

The protein resides in the cytoplasm. It catalyses the reaction L-lysyl-[protein] + 3 S-adenosyl-L-methionine = N(6),N(6),N(6)-trimethyl-L-lysyl-[protein] + 3 S-adenosyl-L-homocysteine + 3 H(+). Functionally, methylates ribosomal protein L11. The sequence is that of Ribosomal protein L11 methyltransferase from Escherichia coli O81 (strain ED1a).